A 290-amino-acid chain; its full sequence is 33 kDa chaperonin (290 aa).

Disulfide bonds link cysteine 235-cysteine 237 and cysteine 268-cysteine 271.

This sequence belongs to the HSP33 family. Post-translationally, under oxidizing conditions two disulfide bonds are formed involving the reactive cysteines. Under reducing conditions zinc is bound to the reactive cysteines and the protein is inactive.

It is found in the cytoplasm. Redox regulated molecular chaperone. Protects both thermally unfolding and oxidatively damaged proteins from irreversible aggregation. Plays an important role in the bacterial defense system toward oxidative stress. In Streptococcus mutans serotype c (strain ATCC 700610 / UA159), this protein is 33 kDa chaperonin.